The chain runs to 104 residues: Large ribosomal subunit protein bL21 (104 aa).

The segment covering 81-90 (QGYRRHHGHR) has biased composition (basic residues). The interval 81–104 (QGYRRHHGHRQPYTQVKITGISAG) is disordered.

This sequence belongs to the bacterial ribosomal protein bL21 family. In terms of assembly, part of the 50S ribosomal subunit. Contacts protein L20.

Functionally, this protein binds to 23S rRNA in the presence of protein L20. The sequence is that of Large ribosomal subunit protein bL21 from Halorhodospira halophila (strain DSM 244 / SL1) (Ectothiorhodospira halophila (strain DSM 244 / SL1)).